Here is a 446-residue protein sequence, read N- to C-terminus: Histidine--tRNA ligase (446 aa).

It belongs to the class-II aminoacyl-tRNA synthetase family. Homodimer.

It localises to the cytoplasm. The catalysed reaction is tRNA(His) + L-histidine + ATP = L-histidyl-tRNA(His) + AMP + diphosphate + H(+). This is Histidine--tRNA ligase from Burkholderia pseudomallei (strain 668).